We begin with the raw amino-acid sequence, 314 residues long: Fibrinogen-like protein 1 (314 aa).

The first 22 residues, 1-22 (MGEIRSFVLITVALILGKESWV), serve as a signal peptide directing secretion. Positions 28–62 (CLQEQVRLRAQVRQLETRVKQQQVVIAQLLHEKEV) form a coiled coil. Residues 76-308 (LGGKRHYADC…SVVMKIRPSD (233 aa)) enclose the Fibrinogen C-terminal domain. 2 cysteine pairs are disulfide-bonded: Cys85/Cys114 and Cys250/Cys263.

Homodimer. Interacts (via the Fibrinogen C-terminal domain) with LAG3 (via Ig-like domains 1 and 2).

The protein resides in the secreted. Functionally, immune suppressive molecule that inhibits antigen-specific T-cell activation by acting as a major ligand of LAG3. Responsible for LAG3 T-cell inhibitory function. Binds LAG3 independently from MHC class II (MHC-II). Secreted by, and promotes growth of, hepatocytes. This chain is Fibrinogen-like protein 1, found in Rattus norvegicus (Rat).